The following is a 186-amino-acid chain: UPF0301 protein Saro_0683 (186 aa).

It belongs to the UPF0301 (AlgH) family.

In Novosphingobium aromaticivorans (strain ATCC 700278 / DSM 12444 / CCUG 56034 / CIP 105152 / NBRC 16084 / F199), this protein is UPF0301 protein Saro_0683.